A 160-amino-acid polypeptide reads, in one-letter code: Phosphopantetheine adenylyltransferase (160 aa).

Ser-9 contacts substrate. ATP contacts are provided by residues 9-10 (SF) and His-17. 3 residues coordinate substrate: Lys-41, Ile-73, and Lys-87. ATP-binding positions include 88 to 90 (GLR), Glu-98, and 122 to 128 (YSFVSSS).

This sequence belongs to the bacterial CoaD family. In terms of assembly, homohexamer. It depends on Mg(2+) as a cofactor.

The protein localises to the cytoplasm. It carries out the reaction (R)-4'-phosphopantetheine + ATP + H(+) = 3'-dephospho-CoA + diphosphate. It participates in cofactor biosynthesis; coenzyme A biosynthesis; CoA from (R)-pantothenate: step 4/5. Reversibly transfers an adenylyl group from ATP to 4'-phosphopantetheine, yielding dephospho-CoA (dPCoA) and pyrophosphate. The sequence is that of Phosphopantetheine adenylyltransferase from Mycolicibacterium vanbaalenii (strain DSM 7251 / JCM 13017 / BCRC 16820 / KCTC 9966 / NRRL B-24157 / PYR-1) (Mycobacterium vanbaalenii).